The following is a 555-amino-acid chain: NADH-ubiquinone oxidoreductase chain 5 (555 aa).

The next 15 helical transmembrane spans lie at 37–57 (LAMT…LYAI), 69–89 (FYII…SDNY), 90–110 (IMMF…ISFW), 133–153 (FFML…FDTL), 155–175 (LAAP…LLLA), 197–217 (TPVS…YVLV), 230–250 (LIGI…IAIV), 257–275 (VIAL…AIGI), 287–307 (CHAF…HSYI), 323–343 (LPFS…IPGL), 366–388 (ILYY…VLYL), 406–426 (ENIR…FIGF), 454–474 (WYIK…LVYI), 494–516 (IYYD…GYLN), and 534–554 (RALT…FFFY).

This sequence belongs to the complex I subunit 5 family.

It localises to the mitochondrion inner membrane. It catalyses the reaction a ubiquinone + NADH + 5 H(+)(in) = a ubiquinol + NAD(+) + 4 H(+)(out). In terms of biological role, core subunit of the mitochondrial membrane respiratory chain NADH dehydrogenase (Complex I) that is believed to belong to the minimal assembly required for catalysis. Complex I functions in the transfer of electrons from NADH to the respiratory chain. The immediate electron acceptor for the enzyme is believed to be ubiquinone. The polypeptide is NADH-ubiquinone oxidoreductase chain 5 (ND5) (Candida parapsilosis (Yeast)).